Consider the following 141-residue polypeptide: Hemoglobin subunit alpha (141 aa).

The 141-residue stretch at 1–141 folds into the Globin domain; sequence VLSPADKTNV…VSTVLTSKYR (141 aa). At serine 3 the chain carries Phosphoserine. At lysine 7 the chain carries N6-succinyllysine. The residue at position 8 (threonine 8) is a Phosphothreonine. Lysine 11 is modified (N6-succinyllysine). Position 35 is a phosphoserine (serine 35). Lysine 40 is subject to N6-succinyllysine. The residue at position 49 (serine 49) is a Phosphoserine. O2 is bound at residue histidine 58. Histidine 87 is a binding site for heme b. Residue serine 102 is modified to Phosphoserine. Threonine 108 carries the post-translational modification Phosphothreonine. At serine 124 the chain carries Phosphoserine. A phosphothreonine mark is found at threonine 134 and threonine 137. Residue serine 138 is modified to Phosphoserine.

It belongs to the globin family. As to quaternary structure, heterotetramer of two alpha chains and two beta chains. In terms of tissue distribution, red blood cells.

Functionally, involved in oxygen transport from the lung to the various peripheral tissues. Its function is as follows. Hemopressin acts as an antagonist peptide of the cannabinoid receptor CNR1. Hemopressin-binding efficiently blocks cannabinoid receptor CNR1 and subsequent signaling. In Eulemur fulvus fulvus (Brown lemur), this protein is Hemoglobin subunit alpha (HBA).